The chain runs to 231 residues: Cuticle protein LPCP-23 (231 aa).

Residues 1–17 form the signal peptide; the sequence is MAFKFVVFAAALAYANA. 2 tandem repeats follow at residues 130–133 and 199–202.

In terms of biological role, component of the cuticle of Tenebrio molitor. The protein is Cuticle protein LPCP-23 (LPCP-23) of Tenebrio molitor (Yellow mealworm beetle).